A 305-amino-acid polypeptide reads, in one-letter code: Oxygen-dependent coproporphyrinogen-III oxidase (305 aa).

Residue serine 98 coordinates substrate. 2 residues coordinate a divalent metal cation: histidine 102 and histidine 112. Histidine 112 acts as the Proton donor in catalysis. Asparagine 114–arginine 116 lines the substrate pocket. 2 residues coordinate a divalent metal cation: histidine 151 and histidine 181. Residues tyrosine 246–glutamate 281 form an important for dimerization region. Glycine 264–arginine 266 contacts substrate.

The protein belongs to the aerobic coproporphyrinogen-III oxidase family. In terms of assembly, homodimer. The cofactor is a divalent metal cation.

Its subcellular location is the cytoplasm. The catalysed reaction is coproporphyrinogen III + O2 + 2 H(+) = protoporphyrinogen IX + 2 CO2 + 2 H2O. The protein operates within porphyrin-containing compound metabolism; protoporphyrin-IX biosynthesis; protoporphyrinogen-IX from coproporphyrinogen-III (O2 route): step 1/1. In terms of biological role, involved in the heme biosynthesis. Catalyzes the aerobic oxidative decarboxylation of propionate groups of rings A and B of coproporphyrinogen-III to yield the vinyl groups in protoporphyrinogen-IX. This Vibrio vulnificus (strain YJ016) protein is Oxygen-dependent coproporphyrinogen-III oxidase.